A 145-amino-acid polypeptide reads, in one-letter code: Late embryogenesis abundant protein D-11 (145 aa).

The segment covering 1 to 18 has biased composition (polar residues); sequence MAHFQNQYSAPEVTQTDA. Positions 1 to 136 are disordered; it reads MAHFQNQYSA…EAPWSPQPLI (136 aa). The span at 47–57 shows a compositional bias: basic residues; that stretch reads GHHHGGHHGLH. Positions 58–68 are enriched in low complexity; sequence RTGSSSSSSSS. Positions 82–96 are enriched in basic and acidic residues; sequence KERLKEKIPGNKEHQ. Polar residues predominate over residues 97-107; it reads SQATSTTTPGQ.

This sequence belongs to the plant dehydrin family.

In terms of biological role, LEA protein are late embryogenesis abundant in higher plant seed embryos. There are two subsets of LEA proteins (5a, and 5b), the first ones are expressed when the cotyledon weight reach 80 mg and the second set are expressed above 100 mg. The function of those proteins is not known. The sequence is that of Late embryogenesis abundant protein D-11 from Gossypium hirsutum (Upland cotton).